Consider the following 395-residue polypeptide: Thyroid hormone receptor beta (395 aa).

The modulating stretch occupies residues 1 to 31 (MSEQADKCNSRWKDEAMQNGYIPSYLDKDEL). Residues 29-106 (DELCVVCGDK…VGMATDLVLD (78 aa)) constitute a DNA-binding region (nuclear receptor). Residues Cys32, Cys35, Cys49, Cys52, Cys70, Cys76, Cys86, and Cys89 each contribute to the Zn(2+) site. 2 NR C4-type zinc fingers span residues 32–52 (CVVC…CEGC) and 70–89 (CKYE…CQEC). An NR LBD domain is found at 142 to 395 (EEWEMIRVVT…PPLFLEVFED (254 aa)). Positions 216, 265, and 369 each coordinate 3,3',5-triiodo-L-thyronine.

This sequence belongs to the nuclear hormone receptor family. NR1 subfamily. Interacts (via the ligand-binding domain) with ncoa2. In terms of tissue distribution, widely expressed in a range of adult tissues including the brain, eye, fin, gill, intestine, liver, swim bladder and ovary. In the eye, expressed in the outer nuclear layer of the retina.

It is found in the nucleus. Functionally, nuclear hormone receptor that can act as a repressor or activator of transcription. High affinity receptor for the thyroid gland hormone triiodothyronine (T3). Transactivating activity is ligand-dependent, and is repressed in the absence of T3. This Danio rerio (Zebrafish) protein is Thyroid hormone receptor beta (thrb).